Reading from the N-terminus, the 448-residue chain is Bifunctional F420 biosynthesis protein FbiB (448 aa).

The coenzyme F420:L-glutamate ligase stretch occupies residues 1-244 (MTGPEHGSAS…PGANDLFWLG (244 aa)). GTP-binding positions include 20–23 (LPEF), S50, and K55. An a divalent metal cation-binding site is contributed by D109. GTP is bound at residue N112. Positions 150 and 151 each coordinate a divalent metal cation. Residues 245 to 448 (TAEALELGRQ…VPAADLLILK (204 aa)) are dehydro-coenzyme F420-0 reductase. FMN-binding positions include 260–264 (RRSVR) and A288. D320 is a binding site for coenzyme F420-(gamma-Glu)n. FMN contacts are provided by G399 and R436.

The protein in the N-terminal section; belongs to the CofE family. It depends on Mg(2+) as a cofactor. Mn(2+) is required as a cofactor. K(+) serves as cofactor.

The enzyme catalyses oxidized coenzyme F420-0 + GTP + L-glutamate = oxidized coenzyme F420-1 + GDP + phosphate + H(+). It carries out the reaction oxidized coenzyme F420-1 + GTP + L-glutamate = oxidized coenzyme F420-2 + GDP + phosphate + H(+). It catalyses the reaction oxidized coenzyme F420-(gamma-L-Glu)(n) + GTP + L-glutamate = oxidized coenzyme F420-(gamma-L-Glu)(n+1) + GDP + phosphate + H(+). The catalysed reaction is oxidized coenzyme F420-0 + FMN + H(+) = dehydro coenzyme F420-0 + FMNH2. Its pathway is cofactor biosynthesis; coenzyme F420 biosynthesis. Functionally, bifunctional enzyme that catalyzes the GTP-dependent successive addition of multiple gamma-linked L-glutamates to the L-lactyl phosphodiester of 7,8-didemethyl-8-hydroxy-5-deazariboflavin (F420-0) to form polyglutamated F420 derivatives, and the FMNH2-dependent reduction of dehydro-F420-0 to form F420-0. The polypeptide is Bifunctional F420 biosynthesis protein FbiB (Mycobacterium tuberculosis (strain ATCC 25177 / H37Ra)).